We begin with the raw amino-acid sequence, 103 residues long: Putative membrane protein insertion efficiency factor (103 aa).

The disordered stretch occupies residues His-68–Leu-103. Residues Asn-87–Leu-103 are compositionally biased toward polar residues.

The protein belongs to the UPF0161 family.

Its subcellular location is the cell inner membrane. Its function is as follows. Could be involved in insertion of integral membrane proteins into the membrane. This chain is Putative membrane protein insertion efficiency factor, found in Idiomarina loihiensis (strain ATCC BAA-735 / DSM 15497 / L2-TR).